Here is a 148-residue protein sequence, read N- to C-terminus: Endoribonuclease YbeY (148 aa).

Zn(2+)-binding residues include His-113, His-117, and His-123.

This sequence belongs to the endoribonuclease YbeY family. Requires Zn(2+) as cofactor.

The protein localises to the cytoplasm. Single strand-specific metallo-endoribonuclease involved in late-stage 70S ribosome quality control and in maturation of the 3' terminus of the 16S rRNA. This Borrelia recurrentis (strain A1) protein is Endoribonuclease YbeY.